Here is a 417-residue protein sequence, read N- to C-terminus: Glutamate-1-semialdehyde 2,1-aminomutase (417 aa).

N6-(pyridoxal phosphate)lysine is present on Lys-267.

This sequence belongs to the class-III pyridoxal-phosphate-dependent aminotransferase family. HemL subfamily. As to quaternary structure, homodimer. It depends on pyridoxal 5'-phosphate as a cofactor.

Its subcellular location is the cytoplasm. The enzyme catalyses (S)-4-amino-5-oxopentanoate = 5-aminolevulinate. Its pathway is porphyrin-containing compound metabolism; protoporphyrin-IX biosynthesis; 5-aminolevulinate from L-glutamyl-tRNA(Glu): step 2/2. This Solibacter usitatus (strain Ellin6076) protein is Glutamate-1-semialdehyde 2,1-aminomutase.